Consider the following 72-residue polypeptide: Large ribosomal subunit protein bL28 (72 aa).

It belongs to the bacterial ribosomal protein bL28 family.

The polypeptide is Large ribosomal subunit protein bL28 (Chlorobium phaeovibrioides (strain DSM 265 / 1930) (Prosthecochloris vibrioformis (strain DSM 265))).